Consider the following 354-residue polypeptide: Tryptophan--tRNA ligase (354 aa).

Residues 13–15 (QPT) and 21–22 (GN) each bind ATP. Positions 14 to 22 (PTGNLHLGN) match the 'HIGH' region motif. Asp-137 serves as a coordination point for L-tryptophan. ATP-binding positions include 149-151 (GDD), Val-208, and 217-221 (KMSKS). The short motif at 217–221 (KMSKS) is the 'KMSKS' region element.

This sequence belongs to the class-I aminoacyl-tRNA synthetase family. Homodimer.

It localises to the cytoplasm. It catalyses the reaction tRNA(Trp) + L-tryptophan + ATP = L-tryptophyl-tRNA(Trp) + AMP + diphosphate + H(+). In terms of biological role, catalyzes the attachment of tryptophan to tRNA(Trp). The sequence is that of Tryptophan--tRNA ligase from Rhizobium meliloti (strain 1021) (Ensifer meliloti).